A 321-amino-acid chain; its full sequence is Transmembrane protein 255A (321 aa).

The next 4 membrane-spanning stretches (helical) occupy residues 29–49 (VFVT…GMAA), 56–76 (VTVG…LGII), 88–108 (LVAS…CAIV), and 200–220 (TILN…LGGF). A compositionally biased stretch (polar residues) spans 279–297 (STPSGLSDDPNGQASSFMW). A disordered region spans residues 279-300 (STPSGLSDDPNGQASSFMWPSN).

The protein belongs to the TMEM255 family.

The protein localises to the membrane. The sequence is that of Transmembrane protein 255A (tmem255a) from Xenopus laevis (African clawed frog).